Consider the following 215-residue polypeptide: Thymidylate kinase (215 aa).

Position 12-19 (12-19 (GIDGAGKS)) interacts with ATP.

It belongs to the thymidylate kinase family.

The enzyme catalyses dTMP + ATP = dTDP + ADP. Its function is as follows. Phosphorylation of dTMP to form dTDP in both de novo and salvage pathways of dTTP synthesis. This is Thymidylate kinase from Albidiferax ferrireducens (strain ATCC BAA-621 / DSM 15236 / T118) (Rhodoferax ferrireducens).